The chain runs to 334 residues: F-box only protein 16 (334 aa).

The F-box domain maps to 86 to 132 (LDFTTKLPRVLSVYIFSFLDPRSLCRCAQVSWYWKSLAELDQLWMLK). Disordered regions lie at residues 168–222 (PKTP…WRSS) and 314–334 (LEHL…QSQS). The span at 194 to 204 (SPSLAFRSSSS) shows a compositional bias: low complexity. Residues 210-222 (NPGEKELPPWRSS) are compositionally biased toward basic and acidic residues. Over residues 323-334 (LQSPSPRLQSQS) the composition is skewed to low complexity.

In terms of assembly, part of a SCF (SKP1-cullin-F-box) protein ligase complex.

Its function is as follows. Probably recognizes and binds to some phosphorylated proteins and promotes their ubiquitination and degradation. The polypeptide is F-box only protein 16 (Fbxo16) (Mus musculus (Mouse)).